Reading from the N-terminus, the 376-residue chain is Ribonucleoside-diphosphate reductase subunit beta (376 aa).

Residues Asp-85, Glu-116, and His-119 each coordinate Fe cation. Tyr-123 is a catalytic residue. The Fe cation site is built by Glu-205, Glu-239, and His-242.

It belongs to the ribonucleoside diphosphate reductase small chain family. In terms of assembly, tetramer of two alpha and two beta subunits. It depends on Fe cation as a cofactor.

The catalysed reaction is a 2'-deoxyribonucleoside 5'-diphosphate + [thioredoxin]-disulfide + H2O = a ribonucleoside 5'-diphosphate + [thioredoxin]-dithiol. Its function is as follows. Provides the precursors necessary for DNA synthesis. Catalyzes the biosynthesis of deoxyribonucleotides from the corresponding ribonucleotides. The polypeptide is Ribonucleoside-diphosphate reductase subunit beta (nrdB) (Haemophilus influenzae (strain ATCC 51907 / DSM 11121 / KW20 / Rd)).